The sequence spans 517 residues: Lysophosphatidylcholine acyltransferase 1 (517 aa).

The Cytoplasmic segment spans residues 1 to 52; it reads MRFPNRKLHTAVNGGDSGVSTHFRNPFVHELRFTTLQKLKIAVMTVTLFPVR. The helical; Signal-anchor for type II membrane protein transmembrane segment at 53 to 73 threads the bilayer; sequence LLFAAFMMLLAWPFAFVATVG. The Lumenal segment spans residues 74–517; it reads RSENAVEPLS…SPRNHSKKQD (444 aa). Residues 129 to 134 carry the HXXXXD motif motif; the sequence is HSSYFD. N207 carries N-linked (GlcNAc...) asparagine glycosylation. The region spanning 443-478 is the EF-hand domain; that stretch reads VGDLAVSELFRAIDSQDKGKITFDELCSFMEKCPDL. N511 carries N-linked (GlcNAc...) asparagine glycosylation. The short motif at 514–517 is the Di-lysine motif element; sequence KKQD.

It belongs to the 1-acyl-sn-glycerol-3-phosphate acyltransferase family.

It localises to the endoplasmic reticulum membrane. It is found in the golgi apparatus membrane. Its subcellular location is the cell membrane. The protein localises to the lipid droplet. It carries out the reaction a 1-acyl-sn-glycero-3-phosphocholine + an acyl-CoA = a 1,2-diacyl-sn-glycero-3-phosphocholine + CoA. It catalyses the reaction a 1-O-alkyl-sn-glycero-3-phosphocholine + acetyl-CoA = a 1-O-alkyl-2-acetyl-sn-glycero-3-phosphocholine + CoA. The catalysed reaction is a 1-acyl-sn-glycero-3-phosphate + an acyl-CoA = a 1,2-diacyl-sn-glycero-3-phosphate + CoA. The enzyme catalyses a 1-O-(1Z-alkenyl)-sn-glycero-3-phosphocholine + an acyl-CoA = a 1-O-(1Z-alkenyl)-2-acyl-sn-glycero-3-phosphocholine + CoA. It carries out the reaction 1-acyl-sn-glycero-3-phospho-(1'-sn-glycerol) + an acyl-CoA = a 1,2-diacyl-sn-glycero-3-phospho-(1'-sn-glycerol) + CoA. It catalyses the reaction 1-hexadecanoyl-sn-glycero-3-phosphocholine + hexadecanoyl-CoA = 1,2-dihexadecanoyl-sn-glycero-3-phosphocholine + CoA. The catalysed reaction is 1-O-hexadecyl-sn-glycero-3-phosphocholine + hexadecanoyl-CoA = 1-O-hexadecyl-2-hexadecanoyl-sn-glycero-3-phosphocholine + CoA. The enzyme catalyses a 1-O-(1Z-alkenyl)-sn-glycero-3-phosphocholine + hexadecanoyl-CoA = 1-O-(1Z)-alkenyl-2-hexadecanoyl-sn-glycero-3-phosphocholine + CoA. It carries out the reaction 1-hexadecanoyl-sn-glycero-3-phospho-(1'-sn-glycerol) + hexadecanoyl-CoA = 1,2-dihexadecanoyl-sn-glycero-3-phospho-(1'-sn-glycerol) + CoA. It catalyses the reaction 1-dodecanoyl-sn-glycero-3-phosphocholine + hexadecanoyl-CoA = 1-dodecanoyl-2-hexadecanoyl-sn-glycero-3-phosphocholine + CoA. The catalysed reaction is 1-tetradecanoyl-sn-glycero-3-phosphocholine + hexadecanoyl-CoA = 1-tetradecanoyl-2-hexadecanoyl-sn-glycero-3-phosphocholine + CoA. The enzyme catalyses 1-O-octadecyl-sn-glycero-3-phosphocholine + hexadecanoyl-CoA = 1-O-octadecyl-2-hexadecanoyl-sn-glycero-3-phosphocholine + CoA. It carries out the reaction 1-octadecanoyl-sn-glycero-3-phosphocholine + hexadecanoyl-CoA = 1-octadecanoyl-2-hexadecanoyl-sn-glycero-3-phosphocholine + CoA. It catalyses the reaction 1-(9Z-octadecenoyl)-sn-glycero-3-phosphocholine + hexadecanoyl-CoA = 1-(9Z-octadecenoyl)-2-hexadecanoyl-sn-glycero-3-phosphocholine + CoA. The catalysed reaction is 1-eicosanoyl-sn-glycero-3-phosphocholine + hexadecanoyl-CoA = 1-eicosanoyl-2-hexadecanoyl-sn-glycero-3-phosphocholine + CoA. The enzyme catalyses hexanoyl-CoA + 1-hexadecanoyl-sn-glycero-3-phosphocholine = 1-hexadecanoyl-2-hexanoyl-sn-glycero-3-phosphocholine + CoA. It carries out the reaction octanoyl-CoA + 1-hexadecanoyl-sn-glycero-3-phosphocholine = 1-hexadecanoyl-2-octanoyl-sn-glycero-3-phosphocholine + CoA. It catalyses the reaction decanoyl-CoA + 1-hexadecanoyl-sn-glycero-3-phosphocholine = 1-hexadecanoyl-2-decanoyl-sn-glycero-3-phosphocholine + CoA. The catalysed reaction is dodecanoyl-CoA + 1-hexadecanoyl-sn-glycero-3-phosphocholine = 1-hexadecanoyl-2-dodecanoyl-sn-glycero-3-phosphocholine + CoA. The enzyme catalyses tetradecanoyl-CoA + 1-hexadecanoyl-sn-glycero-3-phosphocholine = 1-hexadecanoyl-2-tetradecanoyl-sn-glycero-3-phosphocholine + CoA. It carries out the reaction 1-hexadecanoyl-sn-glycero-3-phosphocholine + (9Z)-octadecenoyl-CoA = 1-hexadecanoyl-2-(9Z-octadecenoyl)-sn-glycero-3-phosphocholine + CoA. It catalyses the reaction (9Z,12Z)-octadecadienoyl-CoA + 1-hexadecanoyl-sn-glycero-3-phosphocholine = 1-hexadecanoyl-2-(9Z,12Z-octadecadienoyl)-sn-glycero-3-phosphocholine + CoA. The catalysed reaction is (4Z,7Z,10Z,13Z,16Z,19Z)-docosahexaenoyl-CoA + 1-hexadecanoyl-sn-glycero-3-phosphocholine = 1-hexadecanoyl-2-(4Z,7Z,10Z,13Z,16Z,19Z-docosahexaenoyl)-sn-glycero-3-phosphocholine + CoA. The enzyme catalyses 1-hexadecanoyl-sn-glycero-3-phosphocholine + acetyl-CoA = 1-hexadecanoyl-2-acetyl-sn-glycero-3-phosphocholine + CoA. It carries out the reaction eicosanoyl-CoA + 1-hexadecanoyl-sn-glycero-3-phosphocholine = 1-hexadecanoyl-2-eicosanoyl-sn-glycero-3-phosphocholine + CoA. It catalyses the reaction 1-O-hexadecyl-sn-glycero-3-phosphocholine + acetyl-CoA = 1-O-hexadecyl-2-acetyl-sn-glycero-3-phosphocholine + CoA. The catalysed reaction is a 1-acyl-sn-glycero-3-phosphocholine + hexadecanoyl-CoA = 1-acyl-2-hexadecanoyl-sn-glycero-3-phosphocholine + CoA. The enzyme catalyses a 1-acyl-sn-glycero-3-phosphate + hexadecanoyl-CoA = 1-acyl-2-hexadecanoyl-sn-glycero-3-phosphate + CoA. It carries out the reaction 1-acyl-sn-glycero-3-phospho-(1'-sn-glycerol) + hexadecanoyl-CoA = 1-acyl-2-hexadecanoyl-sn-glycero-3-phospho-(1'-sn-glycerol) + CoA. Its pathway is lipid metabolism; phospholipid metabolism. Its function is as follows. Exhibits both acyltransferase and acetyltransferase activities. Activity is calcium-independent. Catalyzes the conversion of lysophosphatidylcholine (1-acyl-sn-glycero-3-phosphocholine or LPC) into phosphatidylcholine (1,2-diacyl-sn-glycero-3-phosphocholine or PC). Catalyzes the conversion 1-acyl-sn-glycerol-3-phosphate (lysophosphatidic acid or LPA) into 1,2-diacyl-sn-glycerol-3-phosphate (phosphatidic acid or PA) by incorporating an acyl moiety at the sn-2 position of the glycerol backbone. This is Lysophosphatidylcholine acyltransferase 1 (lpcat1) from Danio rerio (Zebrafish).